Consider the following 328-residue polypeptide: TNPSDPTGTCVSAVDCQGSAGYYTDDSVSDAKECKKCNAPCTACAGTADKCTKCDANGAAPYLKKTNPSDPTGTCVSAVDCQGSAGYYTDDSVSDAKECKKCNAPCTACAGTADKCTKCDANGAAPYLKKTNPSDPTGTCVSAVDCQGSAGYYTDDSVSDAKECKKCAEGQKPNTAGTQCFSCSDANCERCDQNDVCARCSTGAPPENGKCPAATPGCHSSCDGCTENAMTNQADKCTGCKEGRYLKPESAAGQSGACLTAEECTSDKTHFTREKAGDSKGMCLSCSDATHGITGCKKCALKTLSGEAESTVVCSECTDKRLTPSGNA.

2 repeats span residues 38–102 (NAPC…CKKC) and 103–167 (NAPC…CKKC).

The polypeptide is Surface antigen CRP170 (Giardia intestinalis (Giardia lamblia)).